We begin with the raw amino-acid sequence, 292 residues long: MAQPPPDVEGDDCLPEYHHLFCPDLLQDKVAFITGGGSGIGFRIAEIFMRHGCHTVIVGRSLQKVTTAAKKLVAATGKRCLPLSMDVRVPPEVMTAVDQALQEFGKINILINCAAGNFLCPASALSFNAFKTVVDIDTIGTFNVSSVLYKKFFRDHGGVIVNITATLSMRGQVLQLHAGAAKAAVDAMTRHLAVEWGPQNIRVNSLAPGAISGTEGLRRLRGSNASSKLKHFSNPIPRLGTKTEIAHSVLYLASPLASYVSGIVLVVDGGSWMTFPNGIKQLLEFESFSAKL.

An N-acetylalanine modification is found at Ala-2. NADP(+) contacts are provided by residues 35-40 (GGGSGI), 60-64 (RSLQK), and Asp-86. Arg-60 is a binding site for substrate. Lys-64 is modified (N6-acetyllysine). Residues Arg-88, Phe-118, and 126–128 (SFN) contribute to the substrate site. Lys-151 bears the N6-acetyllysine mark. NADP(+) is bound by residues Lys-182 and 208–214 (PGAISGT). Arg-219 is a binding site for substrate. Ser-287 carries the post-translational modification Phosphoserine. The short motif at 290–292 (AKL) is the Microbody targeting signal element. N6-acetyllysine is present on Lys-291.

The protein belongs to the short-chain dehydrogenases/reductases (SDR) family. 2,4-dienoyl-CoA reductase subfamily. As to quaternary structure, monomer, dimer and oligomer.

Its subcellular location is the peroxisome. The catalysed reaction is a (2E,4Z)-dienoyl-CoA + NADPH + H(+) = a 4,5-saturated-(3E)-enoyl-CoA + NADP(+). It carries out the reaction a (2E,4E)-dienoyl-CoA + NADPH + H(+) = a 4,5-saturated-(3E)-enoyl-CoA + NADP(+). It catalyses the reaction (2E,4E)-hexadienoyl-CoA + NADPH + H(+) = (3E)-hexenoyl-CoA + NADP(+). The enzyme catalyses (2E,4E)-decadienoyl-CoA + NADPH + H(+) = (3E)-decenoyl-CoA + NADP(+). The catalysed reaction is (2E,4Z,7Z,10Z,13Z,16Z,19Z)-docosaheptaenoyl-CoA + NADPH + H(+) = (3E,7Z,10Z,13Z,16Z,19Z)-docosahexaenoyl-CoA + NADP(+). In terms of biological role, auxiliary enzyme of beta-oxidation. Participates in the degradation of unsaturated fatty enoyl-CoA esters having double bonds in both even- and odd-numbered positions in peroxisome. Catalyzes the NADP-dependent reduction of 2,4-dienoyl-CoA to yield trans-3-enoyl-CoA. Has activity towards short and medium chain 2,4-dienoyl-CoAs, but also towards 2,4,7,10,13,16,19-docosaheptaenoyl-CoA, suggesting that it does not constitute a rate limiting step in the peroxisomal degradation of docosahexaenoic acid. This Mus musculus (Mouse) protein is Peroxisomal 2,4-dienoyl-CoA reductase [(3E)-enoyl-CoA-producing] (Decr2).